Consider the following 131-residue polypeptide: Small ribosomal subunit protein uS8 (131 aa).

It belongs to the universal ribosomal protein uS8 family. As to quaternary structure, part of the 30S ribosomal subunit. Contacts proteins S5 and S12.

One of the primary rRNA binding proteins, it binds directly to 16S rRNA central domain where it helps coordinate assembly of the platform of the 30S subunit. The sequence is that of Small ribosomal subunit protein uS8 from Burkholderia ambifaria (strain MC40-6).